A 290-amino-acid chain; its full sequence is ATP synthase gamma chain (290 aa).

The protein belongs to the ATPase gamma chain family. F-type ATPases have 2 components, CF(1) - the catalytic core - and CF(0) - the membrane proton channel. CF(1) has five subunits: alpha(3), beta(3), gamma(1), delta(1), epsilon(1). CF(0) has three main subunits: a, b and c.

The protein resides in the cell inner membrane. Its function is as follows. Produces ATP from ADP in the presence of a proton gradient across the membrane. The gamma chain is believed to be important in regulating ATPase activity and the flow of protons through the CF(0) complex. The polypeptide is ATP synthase gamma chain (Buchnera aphidicola subsp. Acyrthosiphon pisum (strain APS) (Acyrthosiphon pisum symbiotic bacterium)).